We begin with the raw amino-acid sequence, 350 residues long: tRNA uridine(34) hydroxylase (350 aa).

The Rhodanese domain maps to 146–240; it reads DDPDALFIDM…YARKAREQGL (95 aa). Cys200 acts as the Cysteine persulfide intermediate in catalysis.

Belongs to the TrhO family.

It catalyses the reaction uridine(34) in tRNA + AH2 + O2 = 5-hydroxyuridine(34) in tRNA + A + H2O. Functionally, catalyzes oxygen-dependent 5-hydroxyuridine (ho5U) modification at position 34 in tRNAs, the first step in 5-carboxymethoxyuridine (cmo5U) biosynthesis. May be part of an alternate pathway, which is able to bypass cmo5U biogenesis in a subset of tRNAs under aerobic conditions. The chain is tRNA uridine(34) hydroxylase from Escherichia coli (strain SMS-3-5 / SECEC).